Here is an 89-residue protein sequence, read N- to C-terminus: UPF0175 protein APE_0276a (89 aa).

The protein belongs to the UPF0175 family.

The polypeptide is UPF0175 protein APE_0276a (Aeropyrum pernix (strain ATCC 700893 / DSM 11879 / JCM 9820 / NBRC 100138 / K1)).